The chain runs to 242 residues: Ubiquitin-conjugating enzyme E2 6 (242 aa).

Residues 1–217 lie on the Cytoplasmic side of the membrane; the sequence is MASRQAYKRL…QPAGNGTTSN (217 aa). The UBC core domain occupies 5–163; sequence QAYKRLSKEY…FPELAEQNRR (159 aa). C87 functions as the Glycyl thioester intermediate in the catalytic mechanism. A helical membrane pass occupies residues 218 to 240; sequence SIGRSLLFVLFSLAALLVAVCYT.

It belongs to the ubiquitin-conjugating enzyme family.

It is found in the endoplasmic reticulum membrane. It catalyses the reaction S-ubiquitinyl-[E1 ubiquitin-activating enzyme]-L-cysteine + [E2 ubiquitin-conjugating enzyme]-L-cysteine = [E1 ubiquitin-activating enzyme]-L-cysteine + S-ubiquitinyl-[E2 ubiquitin-conjugating enzyme]-L-cysteine.. The protein operates within protein modification; protein ubiquitination. Functionally, catalyzes the covalent attachment of ubiquitin to other proteins. Functions in degradation of misfolded or regulated proteins localized in the endoplasmic reticulum (ER) lumen or membrane via the ubiquitin-proteasome system. Cognate E2 conjugating enzyme for the DOA10 ubiquitin ligase complex, which is part of the ERAD-C pathway responsible for the rapid degradation of membrane proteins with misfolded cytoplasmic domains. The polypeptide is Ubiquitin-conjugating enzyme E2 6 (UBC6) (Eremothecium gossypii (strain ATCC 10895 / CBS 109.51 / FGSC 9923 / NRRL Y-1056) (Yeast)).